A 333-amino-acid chain; its full sequence is Transmembrane protein I329L (333 aa).

Positions 1-31 (MLRVFIFFVFLGSGLTGRIKPQITCKYFISE) are cleaved as a signal peptide. N-linked (GlcNAc...) asparagine; by host glycans are attached at residues asparagine 32, asparagine 39, asparagine 44, asparagine 76, asparagine 82, and asparagine 101. The Extracellular portion of the chain corresponds to 32–239 (NNTWYKYNVT…NTERYKSCYP (208 aa)). Residues 112-133 (ELKFLDLRYNDLQVIEYNILRK) form an LRR repeat. Asparagine 181, asparagine 185, and asparagine 219 each carry an N-linked (GlcNAc...) asparagine; by host glycan. A disulfide bridge links cysteine 195 with cysteine 237. The chain crosses the membrane as a helical span at residues 240 to 260 (LVFISILCSCISFLFLFICLL). At 261-333 (RSICKKYSCT…EKKVSCSRRK (73 aa)) the chain is on the cytoplasmic side.

This sequence belongs to the asfivirus I329L family. In terms of processing, highly glycosylated.

It is found in the host endoplasmic reticulum membrane. The protein resides in the host Golgi apparatus membrane. Its function is as follows. Viral TLR3 homolog that probably prevents TLR3 dimerization and subsequent induction of IFN. Inhibits dsRNA-stimulated activation of NF-kB and IRF3. The protein is Transmembrane protein I329L of Ornithodoros (relapsing fever ticks).